We begin with the raw amino-acid sequence, 145 residues long: Basic phospholipase A2 S11-61 (145 aa).

The N-terminal stretch at 1-19 is a signal peptide; the sequence is MYPVHLLVLLAVCVSLLGA. Positions 20–27 are excised as a propeptide; the sequence is SNIPPQPL. Cystine bridges form between cysteine 38/cysteine 98, cysteine 54/cysteine 144, cysteine 56/cysteine 72, cysteine 71/cysteine 125, cysteine 78/cysteine 118, cysteine 87/cysteine 111, and cysteine 105/cysteine 116. Ca(2+) contacts are provided by tyrosine 55, glycine 57, and glycine 59. Histidine 75 is a catalytic residue. Ca(2+) is bound at residue aspartate 76. The active site involves aspartate 119.

Belongs to the phospholipase A2 family. Group I subfamily. D49 sub-subfamily. Ca(2+) is required as a cofactor. Expressed by the venom gland.

The protein localises to the secreted. The enzyme catalyses a 1,2-diacyl-sn-glycero-3-phosphocholine + H2O = a 1-acyl-sn-glycero-3-phosphocholine + a fatty acid + H(+). Functionally, snake venom phospholipase A2 (PLA2) that inhibits collagen-induced platelet aggregation. PLA2 catalyzes the calcium-dependent hydrolysis of the 2-acyl groups in 3-sn-phosphoglycerides. The chain is Basic phospholipase A2 S11-61 from Austrelaps superbus (Lowland copperhead snake).